A 333-amino-acid chain; its full sequence is NADH-quinone oxidoreductase subunit H (333 aa).

8 consecutive transmembrane segments (helical) span residues 15-35 (FFIF…FVTY), 88-108 (FILA…VIPF), 117-137 (IGVG…GVVT), 159-179 (ISYE…AGSL), 191-211 (VWYI…AVAE), 239-259 (WAFF…LITV), 272-294 (GFIP…LIWF), and 313-333 (ILLP…ELFF).

Belongs to the complex I subunit 1 family. In terms of assembly, NDH-1 is composed of 14 different subunits. Subunits NuoA, H, J, K, L, M, N constitute the membrane sector of the complex.

Its subcellular location is the cell membrane. It catalyses the reaction a quinone + NADH + 5 H(+)(in) = a quinol + NAD(+) + 4 H(+)(out). NDH-1 shuttles electrons from NADH, via FMN and iron-sulfur (Fe-S) centers, to quinones in the respiratory chain. The immediate electron acceptor for the enzyme in this species is believed to be ubiquinone. Couples the redox reaction to proton translocation (for every two electrons transferred, four hydrogen ions are translocated across the cytoplasmic membrane), and thus conserves the redox energy in a proton gradient. This subunit may bind ubiquinone. This is NADH-quinone oxidoreductase subunit H from Bacillus mycoides (strain KBAB4) (Bacillus weihenstephanensis).